A 177-amino-acid polypeptide reads, in one-letter code: Large ribosomal subunit protein uL6 (177 aa).

This sequence belongs to the universal ribosomal protein uL6 family. Part of the 50S ribosomal subunit.

In terms of biological role, this protein binds to the 23S rRNA, and is important in its secondary structure. It is located near the subunit interface in the base of the L7/L12 stalk, and near the tRNA binding site of the peptidyltransferase center. The sequence is that of Large ribosomal subunit protein uL6 from Brucella canis (strain ATCC 23365 / NCTC 10854 / RM-666).